We begin with the raw amino-acid sequence, 304 residues long: Putative S-adenosyl-L-methionine-dependent methyltransferase MSMEG_1481/MSMEI_1445 (304 aa).

S-adenosyl-L-methionine-binding positions include Asp127 and 156 to 157 (DL).

This sequence belongs to the UPF0677 family.

In terms of biological role, exhibits S-adenosyl-L-methionine-dependent methyltransferase activity. This chain is Putative S-adenosyl-L-methionine-dependent methyltransferase MSMEG_1481/MSMEI_1445, found in Mycolicibacterium smegmatis (strain ATCC 700084 / mc(2)155) (Mycobacterium smegmatis).